Reading from the N-terminus, the 21-residue chain is Dahlein-5.2 (21 aa).

As to expression, expressed by the skin dorsal glands.

It localises to the secreted. Functionally, has no antimicrobial activity. Strongly inhibits the formation of NO by neuronal nitric oxide synthase at micromolar concentrations. The chain is Dahlein-5.2 from Ranoidea dahlii (Dahl's aquatic frog).